A 156-amino-acid chain; its full sequence is MNINLTLFGQTIAFAIFVWFCMKFVWPPLTQAMQERQKKIAEGLDAAGRAERDLQLAQERAAQMLRETKEQAAEILDRANKTANAIVEEAKAQARSEGEKLIAGAKAEIDLEVNRAKDQLRAQVAALAVTGAEQILQSTVDGAAHNDLVAKLASQL.

A helical membrane pass occupies residues 7–29 (LFGQTIAFAIFVWFCMKFVWPPL).

It belongs to the ATPase B chain family. As to quaternary structure, F-type ATPases have 2 components, F(1) - the catalytic core - and F(0) - the membrane proton channel. F(1) has five subunits: alpha(3), beta(3), gamma(1), delta(1), epsilon(1). F(0) has three main subunits: a(1), b(2) and c(10-14). The alpha and beta chains form an alternating ring which encloses part of the gamma chain. F(1) is attached to F(0) by a central stalk formed by the gamma and epsilon chains, while a peripheral stalk is formed by the delta and b chains.

It is found in the cell inner membrane. Functionally, f(1)F(0) ATP synthase produces ATP from ADP in the presence of a proton or sodium gradient. F-type ATPases consist of two structural domains, F(1) containing the extramembraneous catalytic core and F(0) containing the membrane proton channel, linked together by a central stalk and a peripheral stalk. During catalysis, ATP synthesis in the catalytic domain of F(1) is coupled via a rotary mechanism of the central stalk subunits to proton translocation. Its function is as follows. Component of the F(0) channel, it forms part of the peripheral stalk, linking F(1) to F(0). The protein is ATP synthase subunit b of Ectopseudomonas mendocina (strain ymp) (Pseudomonas mendocina).